A 795-amino-acid chain; its full sequence is Protein ROOT HAIR DEFECTIVE 3 homolog 1 (795 aa).

The Cytoplasmic segment spans residues 1-682 (MDADKSEGCC…EANRRGNNWL (682 aa)). The GB1/RHD3-type G domain occupies 39 to 254 (GLSYAVVSIM…IAPGGLAGDR (216 aa)). 49 to 56 (GPQSSGKS) is a binding site for GTP. Positions 218–244 (VALSSYEEKEEQFKEQIASLRQRFMHS) form a coiled coil. A helical transmembrane segment spans residues 683 to 703 (PPPWAILALIVLGFNEFMTLL). Topologically, residues 704–706 (RNP) are lumenal. A helical transmembrane segment spans residues 707–727 (LYLGVMFVAFLLAKALWTQLD). At 728-795 (IPGEFRNGAL…PDHKSSSKED (68 aa)) the chain is on the cytoplasmic side. The tract at residues 761–795 (QGEDPPAANPENRRSSNNTSSSENPPDHKSSSKED) is disordered. Over residues 775–784 (SSNNTSSSEN) the composition is skewed to low complexity. Basic and acidic residues predominate over residues 785 to 795 (PPDHKSSSKED).

The protein belongs to the TRAFAC class dynamin-like GTPase superfamily. GB1/RHD3 GTPase family. RHD3 subfamily. In terms of tissue distribution, specifically expressed in flowers.

It localises to the endoplasmic reticulum membrane. Functionally, probable GTP-binding protein that may be involved in cell development. The chain is Protein ROOT HAIR DEFECTIVE 3 homolog 1 from Arabidopsis thaliana (Mouse-ear cress).